Reading from the N-terminus, the 350-residue chain is DNA polymerase IV (350 aa).

The UmuC domain maps to 4-185 (IIHIDMDCFY…LPLGKLPGIG (182 aa)). Mg(2+) is bound by residues D8 and D103. E104 is an active-site residue.

The protein belongs to the DNA polymerase type-Y family. Monomer. Mg(2+) serves as cofactor.

Its subcellular location is the cytoplasm. It carries out the reaction DNA(n) + a 2'-deoxyribonucleoside 5'-triphosphate = DNA(n+1) + diphosphate. In terms of biological role, poorly processive, error-prone DNA polymerase involved in untargeted mutagenesis. Copies undamaged DNA at stalled replication forks, which arise in vivo from mismatched or misaligned primer ends. These misaligned primers can be extended by PolIV. Exhibits no 3'-5' exonuclease (proofreading) activity. May be involved in translesional synthesis, in conjunction with the beta clamp from PolIII. This Aeromonas hydrophila subsp. hydrophila (strain ATCC 7966 / DSM 30187 / BCRC 13018 / CCUG 14551 / JCM 1027 / KCTC 2358 / NCIMB 9240 / NCTC 8049) protein is DNA polymerase IV.